A 239-amino-acid polypeptide reads, in one-letter code: Probable 2-phosphosulfolactate phosphatase (239 aa).

Belongs to the ComB family. Mg(2+) is required as a cofactor.

The enzyme catalyses (2R)-O-phospho-3-sulfolactate + H2O = (2R)-3-sulfolactate + phosphate. The sequence is that of Probable 2-phosphosulfolactate phosphatase from Clostridium botulinum (strain Langeland / NCTC 10281 / Type F).